A 174-amino-acid chain; its full sequence is MIPRTRTLLQSKIPITRYFARCWAPRVRYNVCRTLPAAALHTNIIAHNEVKKDDKKVHLGSFKVDKPKMMIAFTCKKCNTRSSHTMSKQAYEKGTVLISCPHCKVRHLIADHLKIFHDHHVTVEQLMKANGEQVSQDVGDLEFEDIPDSLKDVLGKYAKNNSENASQLPHPSQK.

Residues 1–47 (MIPRTRTLLQSKIPITRYFARCWAPRVRYNVCRTLPAAALHTNIIAH) constitute a mitochondrion transit peptide. The segment at 64–159 (VDKPKMMIAF…LKDVLGKYAK (96 aa)) adopts a DNL-type zinc-finger fold. Residues C75, C78, C100, and C103 each coordinate Zn(2+).

Interacts with SSC1; binds to the nucleotide-free state as well as to the ADP- or ATP-bound state of SSC1. The cofactor is Zn(2+).

The protein localises to the mitochondrion inner membrane. Its function is as follows. Involved in protein import into mitochondria. Acts as a Hsp70-specific chaperone that prevents self-aggregation of the matrix Hsp70 chaperones SSC1 (mtHSP70) and SSQ1, thereby maintaining their function in mitochondrial protein import and Fe/S protein biosynthesis. May act together with PAM18 as co-chaperone to facilitate recognition and folding of imported proteins by SSC1 in the mitochondrial matrix. The polypeptide is Mitochondrial protein import protein ZIM17 (ZIM17) (Saccharomyces cerevisiae (strain AWRI1631) (Baker's yeast)).